A 155-amino-acid polypeptide reads, in one-letter code: SsrA-binding protein (155 aa).

This sequence belongs to the SmpB family.

It localises to the cytoplasm. Its function is as follows. Required for rescue of stalled ribosomes mediated by trans-translation. Binds to transfer-messenger RNA (tmRNA), required for stable association of tmRNA with ribosomes. tmRNA and SmpB together mimic tRNA shape, replacing the anticodon stem-loop with SmpB. tmRNA is encoded by the ssrA gene; the 2 termini fold to resemble tRNA(Ala) and it encodes a 'tag peptide', a short internal open reading frame. During trans-translation Ala-aminoacylated tmRNA acts like a tRNA, entering the A-site of stalled ribosomes, displacing the stalled mRNA. The ribosome then switches to translate the ORF on the tmRNA; the nascent peptide is terminated with the 'tag peptide' encoded by the tmRNA and targeted for degradation. The ribosome is freed to recommence translation, which seems to be the essential function of trans-translation. This chain is SsrA-binding protein, found in Geobacillus thermodenitrificans (strain NG80-2).